The following is a 307-amino-acid chain: UPF0276 protein Bphyt_5128 (307 aa).

The protein belongs to the UPF0276 family.

This chain is UPF0276 protein Bphyt_5128, found in Paraburkholderia phytofirmans (strain DSM 17436 / LMG 22146 / PsJN) (Burkholderia phytofirmans).